The primary structure comprises 445 residues: KICSTOR subunit 2 (445 aa).

Belongs to the KICS2 family. As to quaternary structure, part of the KICSTOR complex composed of KPTN, ITFG2, KICS2 and SZT2. SZT2 probably serves as a link between the other three proteins in the KICSTOR complex and may mediate the direct interaction with the GATOR complex via GATOR1. The KICSTOR complex interacts directly with the GATOR1 complex and most probably indirectly with the GATOR2 complex in an amino acid-independent manner.

Its subcellular location is the lysosome membrane. Its function is as follows. As part of the KICSTOR complex functions in the amino acid-sensing branch of the TORC1 signaling pathway. Recruits, in an amino acid-independent manner, the GATOR1 complex to the lysosomal membranes and allows its interaction with GATOR2 and the RAG GTPases. Functions upstream of the RAG GTPases and is required to negatively regulate mTORC1 signaling in absence of amino acids. In absence of the KICSTOR complex mTORC1 is constitutively localized to the lysosome and activated. The KICSTOR complex is also probably involved in the regulation of mTORC1 by glucose. The chain is KICSTOR subunit 2 from Homo sapiens (Human).